We begin with the raw amino-acid sequence, 118 residues long: Small ribosomal subunit protein uS13 (118 aa).

The disordered stretch occupies residues 94 to 118 (SLPLRGQRTKTNARTRKGPRKPIRK).

This sequence belongs to the universal ribosomal protein uS13 family. In terms of assembly, part of the 30S ribosomal subunit. Forms a loose heterodimer with protein S19. Forms two bridges to the 50S subunit in the 70S ribosome.

Located at the top of the head of the 30S subunit, it contacts several helices of the 16S rRNA. In the 70S ribosome it contacts the 23S rRNA (bridge B1a) and protein L5 of the 50S subunit (bridge B1b), connecting the 2 subunits; these bridges are implicated in subunit movement. Contacts the tRNAs in the A and P-sites. The sequence is that of Small ribosomal subunit protein uS13 from Shewanella halifaxensis (strain HAW-EB4).